The following is a 352-amino-acid chain: N-acetyl-gamma-glutamyl-phosphate reductase (352 aa).

The active site involves Cys-158.

It belongs to the NAGSA dehydrogenase family. Type 1 subfamily.

It localises to the cytoplasm. It carries out the reaction N-acetyl-L-glutamate 5-semialdehyde + phosphate + NADP(+) = N-acetyl-L-glutamyl 5-phosphate + NADPH + H(+). It functions in the pathway amino-acid biosynthesis; L-arginine biosynthesis; N(2)-acetyl-L-ornithine from L-glutamate: step 3/4. Functionally, catalyzes the NADPH-dependent reduction of N-acetyl-5-glutamyl phosphate to yield N-acetyl-L-glutamate 5-semialdehyde. In Mycobacterium bovis (strain BCG / Tokyo 172 / ATCC 35737 / TMC 1019), this protein is N-acetyl-gamma-glutamyl-phosphate reductase.